The chain runs to 258 residues: UPF0246 protein YPK_3600 (258 aa).

This sequence belongs to the UPF0246 family.

The polypeptide is UPF0246 protein YPK_3600 (Yersinia pseudotuberculosis serotype O:3 (strain YPIII)).